The sequence spans 190 residues: dCTP deaminase, dUMP-forming (190 aa).

DCTP is bound by residues 101-106, aspartate 119, 127-129, glutamine 148, tyrosine 162, and glutamine 174; these read KSSLGR and TLE. Glutamate 129 serves as the catalytic Proton donor/acceptor. The tract at residues 163 to 190 is disordered; it reads GSTRVGSKYQGQRGPTPSRSYQNFITST. Positions 171–190 are enriched in polar residues; sequence YQGQRGPTPSRSYQNFITST.

Belongs to the dCTP deaminase family. As to quaternary structure, homotrimer.

The enzyme catalyses dCTP + 2 H2O = dUMP + NH4(+) + diphosphate. It participates in pyrimidine metabolism; dUMP biosynthesis; dUMP from dCTP: step 1/1. Bifunctional enzyme that catalyzes both the deamination of dCTP to dUTP and the hydrolysis of dUTP to dUMP without releasing the toxic dUTP intermediate. This chain is dCTP deaminase, dUMP-forming, found in Mycolicibacterium paratuberculosis (strain ATCC BAA-968 / K-10) (Mycobacterium paratuberculosis).